The primary structure comprises 396 residues: Probable peptidoglycan glycosyltransferase FtsW (396 aa).

Residues 1-27 are Cytoplasmic-facing; sequence MPFLDKVKQQYEDWTRITPSNLLYDRA. A helical transmembrane segment spans residues 28–48; that stretch reads LLLLFFVLLLIGLLAVSSASI. Residues 49–64 lie on the Periplasmic side of the membrane; it reads PVGTRLFKDPFYFAKR. A helical membrane pass occupies residues 65–85; that stretch reads DAIYVFLSCVTCYLCVQVPME. The Cytoplasmic segment spans residues 86–93; that stretch reads KWEQWHVR. A helical transmembrane segment spans residues 94 to 114; it reads LFAFAIFLLILVLIPGIGLSV. The Periplasmic portion of the chain corresponds to 115–122; sequence NGARRWIP. A helical membrane pass occupies residues 123–143; it reads MVLFNFQPAEFAKLALTCFLA. The Cytoplasmic segment spans residues 144–157; it reads SYFTRKYDEVRSRK. A helical membrane pass occupies residues 158–178; the sequence is LSAFKPFALMGLMGLFLLSQP. Over 179–183 the chain is Periplasmic; the sequence is DLGST. Helical transmembrane passes span 184–204 and 205–225; these read VVLFVITFGLLFIVGANFWQF and VGLMAFGGLLFVWLVLSSAYR. Residues 226–285 are Periplasmic-facing; the sequence is LKRFTGFLDPFKDPYGTGFQLSNSLMAFGRGEWVGEGLGNSIQKLEYLPEAHTDFVMAVV. Residues 286–306 traverse the membrane as a helical segment; that stretch reads GEEFGFLGILVIVILLGLLIF. Topologically, residues 307–323 are cytoplasmic; that stretch reads RAMKIGRESLLLEQRFK. A helical transmembrane segment spans residues 324 to 344; that stretch reads GFFAFGISFWIFFQGFVNLGM. Residues 345 to 355 lie on the Periplasmic side of the membrane; sequence SLGLLPTKGLT. Residues 356 to 376 form a helical membrane-spanning segment; it reads FPLISYGGSSLIIMSMTIGLL. The Cytoplasmic segment spans residues 377 to 396; sequence LRIDHENRLMRIGQARLRDD.

It belongs to the SEDS family. FtsW subfamily.

Its subcellular location is the cell inner membrane. The catalysed reaction is [GlcNAc-(1-&gt;4)-Mur2Ac(oyl-L-Ala-gamma-D-Glu-L-Lys-D-Ala-D-Ala)](n)-di-trans,octa-cis-undecaprenyl diphosphate + beta-D-GlcNAc-(1-&gt;4)-Mur2Ac(oyl-L-Ala-gamma-D-Glu-L-Lys-D-Ala-D-Ala)-di-trans,octa-cis-undecaprenyl diphosphate = [GlcNAc-(1-&gt;4)-Mur2Ac(oyl-L-Ala-gamma-D-Glu-L-Lys-D-Ala-D-Ala)](n+1)-di-trans,octa-cis-undecaprenyl diphosphate + di-trans,octa-cis-undecaprenyl diphosphate + H(+). It participates in cell wall biogenesis; peptidoglycan biosynthesis. Its function is as follows. Peptidoglycan polymerase that is essential for cell division. This chain is Probable peptidoglycan glycosyltransferase FtsW, found in Pasteurella multocida (strain Pm70).